A 172-amino-acid chain; its full sequence is 3-hydroxydecanoyl-[acyl-carrier-protein] dehydratase (172 aa).

His-71 is a catalytic residue.

It belongs to the thioester dehydratase family. FabA subfamily. In terms of assembly, homodimer.

The protein localises to the cytoplasm. The catalysed reaction is a (3R)-hydroxyacyl-[ACP] = a (2E)-enoyl-[ACP] + H2O. It catalyses the reaction (3R)-hydroxydecanoyl-[ACP] = (2E)-decenoyl-[ACP] + H2O. The enzyme catalyses (2E)-decenoyl-[ACP] = (3Z)-decenoyl-[ACP]. It participates in lipid metabolism; fatty acid biosynthesis. Functionally, necessary for the introduction of cis unsaturation into fatty acids. Catalyzes the dehydration of (3R)-3-hydroxydecanoyl-ACP to E-(2)-decenoyl-ACP and then its isomerization to Z-(3)-decenoyl-ACP. Can catalyze the dehydratase reaction for beta-hydroxyacyl-ACPs with saturated chain lengths up to 16:0, being most active on intermediate chain length. This chain is 3-hydroxydecanoyl-[acyl-carrier-protein] dehydratase, found in Salmonella arizonae (strain ATCC BAA-731 / CDC346-86 / RSK2980).